A 629-amino-acid chain; its full sequence is Chaperone protein DnaK (629 aa).

The span at 576 to 587 shows a compositional bias: low complexity; it reads QAYQQQQDAQAG. The tract at residues 576–629 is disordered; that stretch reads QAYQQQQDAQAGAAGGAGGMGGMGGMADGPGGAADADGDDEEYVDADFEDVDEE. Positions 588–607 are enriched in gly residues; it reads AAGGAGGMGGMGGMADGPGG. The span at 611 to 629 shows a compositional bias: acidic residues; sequence ADGDDEEYVDADFEDVDEE.

This sequence belongs to the heat shock protein 70 family.

Acts as a chaperone. This is Chaperone protein DnaK from Halobacterium salinarum (strain ATCC 29341 / DSM 671 / R1).